A 503-amino-acid chain; its full sequence is MEFSVKSGSPEKQRSACIVVGVFEPRRLSPIAEQLDKISDGYISALLRRGELEGKPGQTLLLHHVPNVLSERILLIGCGKERELDERQYKQVIQKTINTLNDTGSMEAVCFLTELHVKGRNNYWKVRQAVETAKETLYSFDQLKTNKSEPRRPLRKMVFNVPTRRELTSGERAIQHGLAIAAGIKAAKDLGNMPPNICNAAYLASQARQLADSYSKNVITRVIGEQQMRELGMNAYLAVGHGSQNESLMSVIEYKGNPSEDARPIVLVGKGLTFDSGGISIKPSEGMDEMKYDMCGAAAVYGVMRMVAELQLPINVIGVLAGCENMPGGRAYRPGDVLTTMSGQTVEVLNTDAEGRLVLCDVLTYVERFEPEAVIDVATLTGACVIALGHHITGLMSNHNPLAHELIGASEQAGDRAWRLPLGDEFQEQLESNFADMANIGGRPGGAITAGCFLSRFTRKYNWAHLDIAGTAWRSGKAKGATGRPVALLSQFLLNRAGFNGEE.

Residues K270 and D275 each contribute to the Mn(2+) site. K282 is a catalytic residue. 3 residues coordinate Mn(2+): D293, D352, and E354. Residue R356 is part of the active site.

This sequence belongs to the peptidase M17 family. The cofactor is Mn(2+).

The protein resides in the cytoplasm. It catalyses the reaction Release of an N-terminal amino acid, Xaa-|-Yaa-, in which Xaa is preferably Leu, but may be other amino acids including Pro although not Arg or Lys, and Yaa may be Pro. Amino acid amides and methyl esters are also readily hydrolyzed, but rates on arylamides are exceedingly low.. The enzyme catalyses Release of an N-terminal amino acid, preferentially leucine, but not glutamic or aspartic acids.. Functionally, presumably involved in the processing and regular turnover of intracellular proteins. Catalyzes the removal of unsubstituted N-terminal amino acids from various peptides. This Salmonella agona (strain SL483) protein is Probable cytosol aminopeptidase.